The following is a 372-amino-acid chain: MKYDLIIIGSGSVGAAAGYYATRAGLNVLMTDAHMPPHQHGSHHGDTRLIRHAYGEGEKYVPLVLRAQMLWDELSRHNEDDPIFVRSGVINLGPADSAFLANVAHSAEQWQLNVEKLDAQGIMARWPEIRVPDNYIGLFETDSGFLRSELAIKTWIQLAKEAGCAQLFNCPVTAIRHDDDGVTIETADGEYQAKKAIVCAGTWVKDLLPELPVQPVRKVFAWYQADGRYSVKNKFPAFTGELPNGDQYYGFPAENDALKIGKHNGGQVIHSADERVPFAEVVSDGSEAFPFLRNVLPGIGCCLYGAACTYDNSPDEDFIIDTLPAHDNTLLITGLSGHGFKFASVLGEIAADFAQDKKSDFDLTPFRLSRFQ.

FAD is bound at residue 4–34 (DLIIIGSGSVGAAAGYYATRAGLNVLMTDAH). Cys308 bears the S-8alpha-FAD cysteine mark.

Belongs to the MSOX/MTOX family. MTOX subfamily. Monomer. It depends on FAD as a cofactor.

The catalysed reaction is N(alpha)-methyl-L-tryptophan + O2 + H2O = L-tryptophan + formaldehyde + H2O2. In terms of biological role, catalyzes the oxidative demethylation of N-methyl-L-tryptophan. The sequence is that of N-methyl-L-tryptophan oxidase from Escherichia coli O6:H1 (strain CFT073 / ATCC 700928 / UPEC).